Consider the following 434-residue polypeptide: 3-phosphoshikimate 1-carboxyvinyltransferase (434 aa).

3-phosphoshikimate contacts are provided by lysine 15, serine 16, and arginine 20. Lysine 15 lines the phosphoenolpyruvate pocket. Glycine 96 and arginine 124 together coordinate phosphoenolpyruvate. Residues serine 169, glutamine 171, serine 195, aspartate 319, and lysine 346 each contribute to the 3-phosphoshikimate site. Residue glutamine 171 coordinates phosphoenolpyruvate. Aspartate 319 functions as the Proton acceptor in the catalytic mechanism. Phosphoenolpyruvate is bound by residues arginine 350 and arginine 394.

Belongs to the EPSP synthase family. In terms of assembly, monomer.

Its subcellular location is the cytoplasm. It catalyses the reaction 3-phosphoshikimate + phosphoenolpyruvate = 5-O-(1-carboxyvinyl)-3-phosphoshikimate + phosphate. It functions in the pathway metabolic intermediate biosynthesis; chorismate biosynthesis; chorismate from D-erythrose 4-phosphate and phosphoenolpyruvate: step 6/7. Functionally, catalyzes the transfer of the enolpyruvyl moiety of phosphoenolpyruvate (PEP) to the 5-hydroxyl of shikimate-3-phosphate (S3P) to produce enolpyruvyl shikimate-3-phosphate and inorganic phosphate. This Prosthecochloris aestuarii (strain DSM 271 / SK 413) protein is 3-phosphoshikimate 1-carboxyvinyltransferase.